The following is a 462-amino-acid chain: GTPase Der (462 aa).

EngA-type G domains follow at residues 3–166 and 175–348; these read PVIA…ITEM and IKIA…HSAI. Residues 9–16, 56–60, 118–121, 181–188, 228–232, and 293–296 contribute to the GTP site; these read GRPNVGKS, DTGGI, NKTD, DTAGV, and NKWD. The 85-residue stretch at 349-433 folds into the KH-like domain; sequence QSFSTPKLTR…PLKIEFKGGQ (85 aa).

Belongs to the TRAFAC class TrmE-Era-EngA-EngB-Septin-like GTPase superfamily. EngA (Der) GTPase family. Associates with the 50S ribosomal subunit.

Functionally, GTPase that plays an essential role in the late steps of ribosome biogenesis. The protein is GTPase Der of Legionella pneumophila (strain Lens).